Here is a 292-residue protein sequence, read N- to C-terminus: Probable endonuclease 4 (292 aa).

The Zn(2+) site is built by H71, H111, E148, D182, H185, H217, D230, H232, and E262.

Belongs to the AP endonuclease 2 family. The cofactor is Zn(2+).

The enzyme catalyses Endonucleolytic cleavage to 5'-phosphooligonucleotide end-products.. Functionally, endonuclease IV plays a role in DNA repair. It cleaves phosphodiester bonds at apurinic or apyrimidinic (AP) sites, generating a 3'-hydroxyl group and a 5'-terminal sugar phosphate. This chain is Probable endonuclease 4, found in Aster yellows witches'-broom phytoplasma (strain AYWB).